Consider the following 405-residue polypeptide: Tryptophan synthase beta chain (405 aa).

K98 carries the N6-(pyridoxal phosphate)lysine modification.

The protein belongs to the TrpB family. In terms of assembly, tetramer of two alpha and two beta chains. Pyridoxal 5'-phosphate serves as cofactor.

The catalysed reaction is (1S,2R)-1-C-(indol-3-yl)glycerol 3-phosphate + L-serine = D-glyceraldehyde 3-phosphate + L-tryptophan + H2O. Its pathway is amino-acid biosynthesis; L-tryptophan biosynthesis; L-tryptophan from chorismate: step 5/5. Its function is as follows. The beta subunit is responsible for the synthesis of L-tryptophan from indole and L-serine. The sequence is that of Tryptophan synthase beta chain from Bradyrhizobium diazoefficiens (strain JCM 10833 / BCRC 13528 / IAM 13628 / NBRC 14792 / USDA 110).